The following is a 154-amino-acid chain: Egg-lysin (154 aa).

The N-terminal stretch at 1-18 is a signal peptide; the sequence is MKLFVLCIFAMMATLAMS.

As to quaternary structure, homodimer. As to expression, sperm.

Its function is as follows. Dissolves the egg vitelline layer nonenzymatically during fertilization. It creates a hole of about 3 mu-m in diameter through which the sperm pass. This chain is Egg-lysin, found in Haliotis kamtschatkana (Pinto abalone).